Here is a 172-residue protein sequence, read N- to C-terminus: MKLTKLWLLFVCLGLFVTLVVSADTDSDADSDSSADSDSSADSDENTTASGSIVTSTTESSATNSSGSSDDASGSSSDVDDGSDDDTDSGSDTDYDTPTTAPVVKKRANRKKANNNKKRASNNRKKANNNNNNKKRANSNNNRKRRASNNNNKKKASNNNNRRRNNNSRRRG.

The N-terminal stretch at 1–22 (MKLTKLWLLFVCLGLFVTLVVS) is a signal peptide. A compositionally biased stretch (acidic residues) spans 25-45 (TDSDADSDSSADSDSSADSDE). The disordered stretch occupies residues 25 to 172 (TDSDADSDSS…RRNNNSRRRG (148 aa)). 3 repeat units span residues 27 to 32 (SDADSD), 33 to 38 (SSADSD), and 39 to 44 (SSADSD). The tract at residues 27–44 (SDADSDSSADSDSSADSD) is 3 X 6 AA tandem repeats of S-S-A-D-S-D. Over residues 55–77 (TSTTESSATNSSGSSDDASGSSS) the composition is skewed to low complexity. A compositionally biased stretch (acidic residues) spans 78–95 (DVDDGSDDDTDSGSDTDY). Positions 104–172 (VKKRANRKKA…RRNNNSRRRG (69 aa)) are enriched in basic residues.

Low expression in first to third instar larvae salivary glands.

The polypeptide is Pre-intermoult gene 1 protein (Pig1) (Drosophila melanogaster (Fruit fly)).